A 103-amino-acid chain; its full sequence is Integration host factor subunit beta (103 aa).

Residues 62-81 are disordered; it reads RNPKTGESVALPGKHVPHFK.

Belongs to the bacterial histone-like protein family. Heterodimer of an alpha and a beta chain.

This protein is one of the two subunits of integration host factor, a specific DNA-binding protein that functions in genetic recombination as well as in transcriptional and translational control. This Xanthomonas axonopodis pv. citri (strain 306) protein is Integration host factor subunit beta.